Here is a 1881-residue protein sequence, read N- to C-terminus: Endoribonuclease Dicer-S (1881 aa).

A Helicase ATP-binding domain is found at 41 to 217 (LLEAALDHNI…DLEEKIQNLE (177 aa)). 54–61 (LNSGSGKT) is an ATP binding site. The short motif at 165–168 (DECH) is the DECH box element. The Helicase C-terminal domain occupies 425-594 (SFPSPFTNIL…SMDCGNTESE (170 aa)). The Dicer dsRNA-binding fold domain occupies 622–714 (AIGHINRYCA…MPVGKETVKY (93 aa)). The region spanning 887–1034 (KFVEDIEKSE…LVPELCAIHP (148 aa)) is the PAZ domain. 2 consecutive RNase III domains span residues 1249–1380 (TSDI…ETSG) and 1625–1783 (FENF…MDSG). Glu1293, Asp1371, Glu1374, Glu1664, Asp1769, and Glu1772 together coordinate Mg(2+). A DRBM domain is found at 1808–1873 (VPRSPVRELL…ARRALRSLKA (66 aa)).

Belongs to the helicase family. Dicer subfamily. As to quaternary structure, component of the RISC loading complex (RLC), or micro-RNA (miRNA) loading complex (miRLC), which is composed of dicer1, ago2 and tarbp2; dicer1 and tarbp2 are required to process precursor miRNAs (pre-miRNAs) to mature miRNAs and then load them onto ago2. Note that the trimeric RLC/miRLC is also referred to as RISC. The cofactor is Mg(2+). It depends on Mn(2+) as a cofactor.

The protein resides in the cytoplasm. The enzyme catalyses Endonucleolytic cleavage to 5'-phosphomonoester.. Its function is as follows. Double-stranded RNA (dsRNA) endoribonuclease playing a central role in short dsRNA-mediated post-transcriptional gene silencing. Cleaves naturally occurring long dsRNAs and short hairpin pre-microRNAs (miRNA) into fragments of twenty-one to twenty-three nucleotides with 3' overhang of two nucleotides, producing respectively short interfering RNAs (siRNA) and mature microRNAs. SiRNAs and miRNAs serve as guide to direct the RNA-induced silencing complex (RISC) to complementary RNAs to degrade them or prevent their translation. Gene silencing mediated by siRNAs, also called RNA interference, controls the elimination of transcripts from mobile and repetitive DNA elements of the genome but also the degradation of exogenous RNA of viral origin for instance. The miRNA pathway on the other side is a mean to specifically regulate the expression of target genes. During embryonic development, at the left-right organizer, post-transcriptionally regulates the expression of dand5 in flow sensor cells. In post-flow stages, acts along with Bicc1 to repress dand5 mRNA translation and decay. Decreased Dand5 expression lifts repression of Nodal and defines leftness by induction of the lateral plate mesoderm Nodal signaling cascade. This is Endoribonuclease Dicer-S (dicer1.S) from Xenopus laevis (African clawed frog).